The sequence spans 256 residues: MSILEINNLHVSIEGKEILKGVNLTLKTGEVAAIMGPNGTGKSTLSAAIMGNPNYEVTQGQILLDGVNILDLEVDERARLGLFLAMQYPSEIPGITNAEFMRAAMNADKADEDKISVRDFITKLDEKMALLGMKEEMAERYLNEGFSGGEKKRNEILQLLMLEPKFALLDEIDSGLDIDALKVVSKGVNEMRGKDFGAMIITHYQRLLNYITPDLVHVMMDGRIVLSGDAALATRLEKEGYAGIAQDLGIEYKEES.

Residues 4–246 (LEINNLHVSI…EKEGYAGIAQ (243 aa)) enclose the ABC transporter domain. Residue 36–43 (GPNGTGKS) participates in ATP binding.

This sequence belongs to the ABC transporter superfamily. Ycf16 family.

Its subcellular location is the cell membrane. This Streptococcus pyogenes serotype M18 (strain MGAS8232) protein is Probable ABC transporter ATP-binding protein spyM18_0273.